Here is a 203-residue protein sequence, read N- to C-terminus: IMP cyclohydrolase (203 aa).

The protein belongs to the archaeal IMP cyclohydrolase family.

It carries out the reaction IMP + H2O = 5-formamido-1-(5-phospho-D-ribosyl)imidazole-4-carboxamide. The protein operates within purine metabolism; IMP biosynthesis via de novo pathway; IMP from 5-formamido-1-(5-phospho-D-ribosyl)imidazole-4-carboxamide: step 1/1. Catalyzes the cyclization of 5-formylamidoimidazole-4-carboxamide ribonucleotide to IMP. This chain is IMP cyclohydrolase, found in Methanococcus aeolicus (strain ATCC BAA-1280 / DSM 17508 / OCM 812 / Nankai-3).